Consider the following 344-residue polypeptide: Probable nicotinate-nucleotide adenylyltransferase/Ap4A hydrolase (344 aa).

A naMN adenylyltransferase region spans residues 1 to 182 (MIFGGAFDPL…YIHQHNIYLK (182 aa)). The interval 191–344 (EPRMQHCLRV…LKYVRSLQKN (154 aa)) is ap4A hydrolase. The 112-residue stretch at 193-304 (RMQHCLRVGQ…IYLADKLEPM (112 aa)) folds into the HD domain. Histidine 196 provides a ligand contact to ADP. Fe cation contacts are provided by histidine 196, histidine 225, and aspartate 226. Residues 226-229 (DLAK), histidine 255, 281-282 (HT), aspartate 299, and arginine 305 contribute to the ADP site. Aspartate 299 contacts Fe cation.

The protein in the N-terminal section; belongs to the NadD family. It in the C-terminal section; belongs to the Ap4A hydrolase YqeK family.

It carries out the reaction nicotinate beta-D-ribonucleotide + ATP + H(+) = deamido-NAD(+) + diphosphate. The catalysed reaction is P(1),P(4)-bis(5'-adenosyl) tetraphosphate + H2O = 2 ADP + 2 H(+). It functions in the pathway cofactor biosynthesis; NAD(+) biosynthesis; deamido-NAD(+) from nicotinate D-ribonucleotide: step 1/1. Its function is as follows. Catalyzes the reversible adenylation of nicotinate mononucleotide (NaMN) to nicotinic acid adenine dinucleotide (NaAD). Functionally, hydrolyzes diadenosine 5',5'''-P1,P4-tetraphosphate (Ap4A) to yield ADP. This is Probable nicotinate-nucleotide adenylyltransferase/Ap4A hydrolase from Mycoplasma pneumoniae (strain ATCC 29342 / M129 / Subtype 1) (Mycoplasmoides pneumoniae).